Reading from the N-terminus, the 210-residue chain is MPVSARGAPDAEHWAWSEQTDKGRVVVLSGPSAVGKSTVVRCLRERVSNLHFSVSATTREPRPDEMDGVDYHFVSPARFQQLIDQGALLEWAEIHGGMHRSGTLAEPVRVAAAAGFPVLIEVDLAGARAVKKAMPEAIAVFLAPPSWEDLEARLVGRGTETPEAIRRRLETARIELAAQDDFDEVVVNRRLESACAELVSLLVGAVSGSA.

In terms of domain architecture, Guanylate kinase-like spans 23-203 (GRVVVLSGPS…ACAELVSLLV (181 aa)). 30 to 37 (GPSAVGKS) is a binding site for ATP.

The protein belongs to the guanylate kinase family.

It localises to the cytoplasm. It carries out the reaction GMP + ATP = GDP + ADP. In terms of biological role, essential for recycling GMP and indirectly, cGMP. The sequence is that of Guanylate kinase (gmk) from Mycobacterium leprae (strain TN).